The sequence spans 164 residues: OV-17 antigen (164 aa).

The first 16 residues, 1–16 (MKFVILLTIGLLVVAA), serve as a signal peptide directing secretion. The disordered stretch occupies residues 24 to 43 (QQQQQQQQQRDEREIPPFLE).

This sequence belongs to the SXP/RAL-2 family. In terms of tissue distribution, high levels in the hypodermal layer of the adult female.

This chain is OV-17 antigen (OV17), found in Onchocerca volvulus.